Reading from the N-terminus, the 1135-residue chain is Envelopment polyprotein (1135 aa).

Residues 1–18 form the signal peptide; the sequence is MGIWKWLVMASLVWPVLT. The Lumenal portion of the chain corresponds to 19 to 485; sequence LRNVYDMKIE…VPGFHGWATA (467 aa). Cystine bridges form between Cys-29/Cys-151, Cys-63/Cys-157, Cys-109/Cys-128, Cys-133/Cys-138, Cys-175/Cys-185, Cys-210/Cys-247, Cys-234/Cys-351, Cys-376/Cys-435, Cys-380/Cys-389, Cys-405/Cys-424, and Cys-452/Cys-475. The N-linked (GlcNAc...) asparagine; by host glycan is linked to Asn-134. Asn-235 and Asn-347 each carry an N-linked (GlcNAc...) asparagine; by host glycan. N-linked (GlcNAc...) asparagine; by host glycosylation occurs at Asn-399. Residues 486 to 506 traverse the membrane as a helical segment; the sequence is ALLVTFCFGWVLIPAITFIIL. Over 507–627 the chain is Cytoplasmic; that stretch reads TVLKFIANIF…LNLFRYKSRC (121 aa). The binding to the ribonucleoprotein stretch occupies residues 516–533; sequence FHTSNQENRLKSVLRKIK. 2 consecutive CCHC-type zinc fingers follow at residues 545–565 and 570–591; these read CDVCKYECETYKELKAHGVSC and CPYCFTHCEPTEAAFQAHYKVC. Binding to the ribonucleoprotein regions lie at residues 588–605, 592–603, and 611–625; these read YKVCQVTHRFRDDLKKTV, QVTHRFRDDLKK, and TPGCYRTLNLFRYKS. The region spanning 611–634 is the ITAM domain; the sequence is TPGCYRTLNLFRYKSRCYIFTMWI. The short motif at 615-618 is the YxxL element; that stretch reads YRTL. The chain crosses the membrane as a helical span at residues 628–648; that stretch reads YIFTMWIFLLVLESILWAASA. At 649 to 1105 the chain is on the lumenal side; that stretch reads SETPLTPVWN…EWISGIFSGN (457 aa). 8 cysteine pairs are disulfide-bonded: Cys-735-Cys-770, Cys-739-Cys-777, Cys-751-Cys-885, Cys-765-Cys-896, Cys-780-Cys-904, Cys-806-Cys-815, Cys-823-Cys-832, and Cys-863-Cys-867. Residues 757-777 are fusion loop; that stretch reads YQYETSWGCNPSDCPGVGTGC. N-linked (GlcNAc...) asparagine; by host glycosylation is present at Asn-928. Cystine bridges form between Cys-970/Cys-1000, Cys-993/Cys-1045, Cys-1010/Cys-1015, Cys-1046/Cys-1051, and Cys-1085/Cys-1089. The helical transmembrane segment at 1106 to 1126 threads the bilayer; that stretch reads WIVLIVLCVFLLFSLVLLSIL. The binding to the ribonucleoprotein stretch occupies residues 1122–1135; the sequence is LLSILCPVRKHKKS. Over 1127-1135 the chain is Cytoplasmic; it reads CPVRKHKKS.

The protein belongs to the hantavirus envelope glycoprotein family. Homodimer. Homotetramer; forms heterotetrameric Gn-Gc spikes in the pre-fusion conformation. Interacts (via C-terminus) with the nucleoprotein. Interacts with host TUFM; this interaction contributes to the virus-induced degradation of mitochondria by autophagy, which leads to degradation of host MAVS and inhibition of type I interferon (IFN) responses. Interacts with host MAP1LC3B; this interaction contributes to the virus-induced degradation of mitochondria by autophagy, which leads to degradation of host MAVS and inhibition of type I interferon (IFN) responses. As to quaternary structure, homotetramer; forms heterotetrameric Gn-Gc spikes in the pre-fusion conformation. Homotrimer; forms homotrimer in the post-fusion conformation at acidic pH. Interacts (via C-terminus) with the nucleoprotein. Specific enzymatic cleavage in vivo yield the mature proteins Glycoprotein N and Glycoprotein C.

The protein localises to the virion membrane. The protein resides in the host cell surface. It is found in the host Golgi apparatus membrane. Its subcellular location is the host endoplasmic reticulum membrane. It localises to the host mitochondrion. Its function is as follows. Forms homotetramers with glycoprotein C at the surface of the virion. Attaches the virion to host cell receptors including integrin ITGAV/ITGB3. This attachment induces virion internalization predominantly through clathrin-dependent endocytosis. May also bind to host C1QBP for virus entry into the host cell. Mediates the assembly and budding of infectious virus particles through its interaction with the nucleocapsid protein and the viral genome. May dysregulate normal immune and endothelial cell responses through an ITAM motif. Translocates to mitochondria, binds to host TUFM and recruits MAP1LC3B. These interactions induce mitochondrial autophagy and therefore destruction of host MAVS leading to inhibition of type I interferon (IFN) responses. Concomitant breakdown of glycoprotein N is apparently prevented by the nucleoprotein that may inhibit Gn-stimulated autophagosome-lysosome fusion. Interacts with the viral genomic RNA. Functionally, homodimer. Homotetramer; forms heterotetrameric Gn-Gc spikes in the pre-fusion conformation. Attaches the virion to host cell receptors including integrin ITGAV/ITGB3. This attachment induces virion internalization predominantly through clathrin-dependent endocytosis. May also bind to host C1QBP for virus entry into the host cell. Class II fusion protein that promotes fusion of viral membrane with host endosomal membrane after endocytosis of the virion. The sequence is that of Envelopment polyprotein (GP) from Apodemus agrarius (Eurasian field mouse).